A 432-amino-acid chain; its full sequence is Enolase (432 aa).

(2R)-2-phosphoglycerate is bound at residue glutamine 166. Catalysis depends on glutamate 208, which acts as the Proton donor. The Mg(2+) site is built by aspartate 245, glutamate 291, and aspartate 318. The (2R)-2-phosphoglycerate site is built by lysine 343, arginine 372, serine 373, and lysine 394. The active-site Proton acceptor is lysine 343.

It belongs to the enolase family. It depends on Mg(2+) as a cofactor.

It localises to the cytoplasm. The protein localises to the secreted. It is found in the cell surface. It carries out the reaction (2R)-2-phosphoglycerate = phosphoenolpyruvate + H2O. The protein operates within carbohydrate degradation; glycolysis; pyruvate from D-glyceraldehyde 3-phosphate: step 4/5. Functionally, catalyzes the reversible conversion of 2-phosphoglycerate (2-PG) into phosphoenolpyruvate (PEP). It is essential for the degradation of carbohydrates via glycolysis. The sequence is that of Enolase from Leptospira borgpetersenii serovar Hardjo-bovis (strain L550).